A 343-amino-acid polypeptide reads, in one-letter code: ATPase GET3 (343 aa).

32–39 (KGGVGKTT) lines the ATP pocket. Asp-61 is an active-site residue. Positions 245 and 272 each coordinate ATP. Zn(2+) contacts are provided by Cys-283 and Cys-286.

This sequence belongs to the arsA ATPase family. In terms of assembly, homodimer.

The protein localises to the cytoplasm. Its subcellular location is the endoplasmic reticulum. Functionally, ATPase required for the post-translational delivery of tail-anchored (TA) proteins to the endoplasmic reticulum. Recognizes and selectively binds the transmembrane domain of TA proteins in the cytosol. This complex then targets to the endoplasmic reticulum by membrane-bound receptors, where the tail-anchored protein is released for insertion. This process is regulated by ATP binding and hydrolysis. ATP binding drives the homodimer towards the closed dimer state, facilitating recognition of newly synthesized TA membrane proteins. ATP hydrolysis is required for insertion. Subsequently, the homodimer reverts towards the open dimer state, lowering its affinity for the membrane-bound receptor, and returning it to the cytosol to initiate a new round of targeting. The protein is ATPase GET3 of Pyricularia oryzae (strain 70-15 / ATCC MYA-4617 / FGSC 8958) (Rice blast fungus).